The following is a 177-amino-acid chain: Novel acetylcholine receptor chaperone (177 aa).

At 1–5 (MASPR) the chain is on the cytoplasmic side. Residues 6–26 (TVTVVALSVALGLFFVFMGTI) traverse the membrane as a helical segment. Residues 27–61 (KLTPRLSKDAYSEMKRAYKSYVRALPLLKKMGINS) are Lumenal-facing. The interaction with NGFR stretch occupies residues 43–54 (AYKSYVRALPLL). A helical transmembrane segment spans residues 62–82 (ILLRKSIGALEVACGIVMTLV). Topologically, residues 83-88 (PGRPKD) are cytoplasmic. A helical transmembrane segment spans residues 89–109 (VANFFLLLLVLAVLFFHQLVG). Over 110–114 (DPLKR) the chain is Lumenal. Residues 115–132 (YAHALVFGILLTCRLLIA) traverse the membrane as a helical segment. Topologically, residues 133 to 177 (RKPEDRSSEKKSSPPGNAGSDGNAGNTEEQPSLYEKAPQGKMKLS) are cytoplasmic. The disordered stretch occupies residues 136-177 (EDRSSEKKSSPPGNAGSDGNAGNTEEQPSLYEKAPQGKMKLS).

Belongs to the DoxX family. May interact with NGFR. Interacts with RPN1, RPN2 and CANX.

Its subcellular location is the peroxisome membrane. It localises to the cytoplasmic vesicle. The protein resides in the endoplasmic reticulum membrane. Its function is as follows. Molecular chaperone which mediates the proper assembly and functional expression of the nicotinic acetylcholine receptors (nAChRs) throughout the brain. Essential for the proper folding, assembly, function and surface trafficking of alpha-7 (CHRNA7), alpha-4-beta-2, alpha-3-beta-2 and alpha-3-beta-4 receptors. Stably associates with ribophorin-1 (RPN1) and ribophorin-2 (RPN2) (components of the oligosaccharyl transferase (OST) complex) and with calnexin (CANX), both of which are critical for NACHO-mediated effects on CHRNA7 assembly and function. Facilitates the proper folding and assembly of alpha-6-beta-2 and alpha-6-beta-2-beta-3 receptors and acts at early stages of the nAChRs subunit assembly. Promotes the expression of the alpha-4(2):beta-2(3) stoichiometric form over the alpha-4(3):beta-2(2) form. The protein is Novel acetylcholine receptor chaperone (TMEM35A) of Bos taurus (Bovine).